A 45-amino-acid polypeptide reads, in one-letter code: Osteocalcin (45 aa).

The Gla domain occupies 1–44 (AGTAXGDLTPFQLESLREVCEVNLACEHMADTXGIVAAYTAYYG). Ca(2+)-binding residues include E14, E18, E21, and E27. A 4-carboxyglutamate mark is found at E14, E18, and E21. An intrachain disulfide couples C20 to C26.

Belongs to the osteocalcin/matrix Gla protein family. In terms of processing, gamma-carboxyglutamate residues are formed by vitamin K dependent carboxylation by GGCX. These residues are essential for the binding of calcium.

It is found in the secreted. Its function is as follows. The carboxylated form is one of the main organic components of the bone matrix, which constitutes 1-2% of the total bone protein. The carboxylated form binds strongly to apatite and calcium. The chain is Osteocalcin (bglap) from Danio rerio (Zebrafish).